Reading from the N-terminus, the 402-residue chain is B box and SPRY domain-containing protein (402 aa).

Residues 1 to 20 (MSAEGAEPGPGSGSGPGPGP) are disordered. The segment at 17–65 (GPGPLCPEHGQALSWFCGSERRPVCAACAGLGGRCRGHRIRRAEERAEE) adopts a B box-type zinc-finger fold. Residues 212–402 (PLLTQLWATA…VADQTISIVR (191 aa)) form the B30.2/SPRY domain.

As to quaternary structure, interacts with TRPV5 and TRPV6. Interacts with YWHAZ/14-3-3 protein zeta.

It is found in the cytoplasm. The protein localises to the membrane. In terms of biological role, may regulate epithelial calcium transport by inhibiting TRPV5 activity. This Homo sapiens (Human) protein is B box and SPRY domain-containing protein (BSPRY).